A 116-amino-acid polypeptide reads, in one-letter code: Large ribosomal subunit protein bL21c (116 aa).

The protein belongs to the bacterial ribosomal protein bL21 family. In terms of assembly, part of the 50S ribosomal subunit.

The protein resides in the plastid. Its subcellular location is the chloroplast. In terms of biological role, this protein binds to 23S rRNA. The sequence is that of Large ribosomal subunit protein bL21c from Emiliania huxleyi (Coccolithophore).